We begin with the raw amino-acid sequence, 773 residues long: MRRPRSRGAAKQTRLREADEIRLLEAWIDAGKPARGTRPPPLSKSSSSPADTAAAKRGAKGAGGVPSKAAGEHPEYGACARFDELPLSNKTKDGLRKAGYTEMSEIQRAALPHALCGRDVLGAAKTGSGKTLAFVIPVLEKLYRERWGPEDGVGCIVLSPNKDLAGQIFNVFQKVGKLHGFSAACIVGNRKGLDEEKAVINNMNILVCTPGRLLQHMGETTNFDCSQIQQILVIDEADQVLDKNFQEQVDNVVSQLPKVRQTLLFSATQTKSVKDLARVSLKDPEYISVHEEATTATPDTLEQYAMIVPLEQKLNMLWSFIKRHLKSRILVFLSSVKQVKFVYEVFKKLRPGISLRCMHGRMKYEVQQAIVAEFKEGHSVLFSTDIFARGLDIEDVDWVVQVDCPENIALYIHRVGRTARYNKRGKALIFLCPEEEKMLEKLKAAESKIPIHIKKPNTEQLQQISQNIASVLVQYPNLQQLGKRAFVTYLKSVYLQSDKEVFDLSRFSMENFAAYAASLGLPVTPKIRFVSHKKNVPKKYMGDIDVKRMKRSSKPEVIEINPQAKSNLIEDDGDYDILYPKEQQTDVNMADGLDDVLYPKVSTADTNNEPEKVTQLGNKSVKKKKLKINVHRPLGTRVKFDDEGHTIPPFASIAEEVGSGDVIDKDKISQRYAEMLREMQEHDKEDKLEHKRILREKKLQKKLKLKRKRNEEMDAGSENSGSESDRDQRTASKGKKRYFNSDDEEGSKDAAKDGDVLAQQEALALKLLSKMHS.

Residues 28 to 71 (IDAGKPARGTRPPPLSKSSSSPADTAAAKRGAKGAGGVPSKAAG) are disordered. Residues 43 to 56 (SKSSSSPADTAAAK) are compositionally biased toward low complexity. The Q motif signature appears at 80–108 (ARFDELPLSNKTKDGLRKAGYTEMSEIQR). The 177-residue stretch at 111–287 (LPHALCGRDV…RVSLKDPEYI (177 aa)) folds into the Helicase ATP-binding domain. 124–131 (AKTGSGKT) is a binding site for ATP. The DEAD box motif lies at 235 to 238 (DEAD). The 154-residue stretch at 309–462 (PLEQKLNMLW…IKKPNTEQLQ (154 aa)) folds into the Helicase C-terminal domain. Residues 664-715 (DKDKISQRYAEMLREMQEHDKEDKLEHKRILREKKLQKKLKLKRKRNEEMDA) adopt a coiled-coil conformation. Residues 699–708 (LQKKLKLKRK) are compositionally biased toward basic residues. The disordered stretch occupies residues 699-755 (LQKKLKLKRKRNEEMDAGSENSGSESDRDQRTASKGKKRYFNSDDEEGSKDAAKDGD).

It belongs to the DEAD box helicase family. DDX10/DBP4 subfamily.

The enzyme catalyses ATP + H2O = ADP + phosphate + H(+). The chain is DEAD-box ATP-dependent RNA helicase 32 from Oryza sativa subsp. japonica (Rice).